The sequence spans 708 residues: Retrotransposon-derived protein PEG10 (708 aa).

Positions 1-50 (MTERRRDELSEEINNLREKVMKQSEENNNLQSQVQKLTEENTTLREQVEP) form a coiled coil. Residues 21 to 74 (MKQSEENNNLQSQVQKLTEENTTLREQVEPTPEDEDDDIELRGAAAAAAPPPPI) are disordered. Positions 26-36 (ENNNLQSQVQK) are enriched in polar residues. A compositionally biased stretch (basic and acidic residues) spans 37–48 (LTEENTTLREQV). The necessary for interaction with ACVRL1 stretch occupies residues 76-275 (EECPEDLPEK…HQVDPTEPVG (200 aa)). A CCHC-type zinc finger spans residues 293-310 (NLCLYCGTGGHYADNCPA). Residues 310–344 (AKASKSSPAGKLPGPAVEGPSATGPEIIRSPQDDA) are disordered. Glycyl lysine isopeptide (Lys-Gly) (interchain with G-Cter in ubiquitin) cross-links involve residues K311 and K314. Phosphoserine is present on residues S316 and L321. Residues R507, R598, and R611 each carry the omega-N-methylarginine modification. Positions 683-708 (PVPQYPPPQPPPPPPPPPPPPSYSTL) are disordered.

In terms of assembly, homooligomer; homooligomerizes into virion-like capsids. Interacts with ACVRL1. Interacts with SIAH1 and SIAH2. In terms of processing, undergoes proteolytic cleavage. Expressed in the cytotrophoblast layer but not in the overlying syncytiotrophoblast of the placenta. Expressed in prostate and breast carcinomas but not in normal breast and prostate epithelial cells. Expressed in the Hep-G2 cell line (at protein level). Expressed in brain, liver, spleen, kidney, thymus, lung, ovary, testis, reactive lymph node, skeletal muscle, adipose tissue and placenta. Expressed in pancreatic and hepatocellular carcinomas (HCC).

It is found in the extracellular vesicle membrane. The protein resides in the cytoplasm. Its subcellular location is the nucleus. Its function is as follows. Retrotransposon-derived protein that binds its own mRNA and self-assembles into virion-like capsids. Forms virion-like extracellular vesicles that encapsulate their own mRNA and are released from cells, enabling intercellular transfer of PEG10 mRNA. Binds its own mRNA in the 5'-UTR region, in the region near the boundary between the nucleocapsid (NC) and protease (PRO) coding sequences and in the beginning of the 3'-UTR region. Involved in placenta formation: required for trophoblast stem cells differentiation. Involved at the immediate early stage of adipocyte differentiation. Overexpressed in many cancers and enhances tumor progression: promotes cell proliferation by driving cell cycle progression from G0/G1. Enhances cancer progression by inhibiting the TGF-beta signaling, possibly via interaction with the TGF-beta receptor ACVRL1. May bind to the 5'-GCCTGTCTTT-3' DNA sequence of the MB1 domain in the myelin basic protein (MBP) promoter; additional evidences are however required to confirm this result. This chain is Retrotransposon-derived protein PEG10, found in Homo sapiens (Human).